The chain runs to 352 residues: Transcription factor MYB51 (352 aa).

2 HTH myb-type domains span residues 10–62 and 63–117; these read ELGL…ANYL and RPDI…KKRL. DNA-binding regions (H-T-H motif) lie at residues 38 to 62 and 90 to 113; these read WRTL…ANYL and WSAI…NTHI. 2 disordered regions span residues 128-157 and 198-219; these read KGIT…DLDN and GGPL…SVDS. Residues 203 to 219 are compositionally biased toward low complexity; it reads STSHTTNTTTTSVSVDS.

Can form complexes with MYC2, MYC3 or MYC4. In terms of tissue distribution, expressed in vegetative parts of the plant, mainly in mature rosette leaves and in trichomes. Detected in roots, but not in mature flowers or siliques.

Its subcellular location is the nucleus. In terms of biological role, transcription factor positively regulating indolic glucosinolate biosynthetic pathway genes. This chain is Transcription factor MYB51 (MYB51), found in Arabidopsis thaliana (Mouse-ear cress).